A 323-amino-acid polypeptide reads, in one-letter code: DNA-directed RNA polymerase subunit alpha (323 aa).

The tract at residues 1-225 is alpha N-terminal domain (alpha-NTD); sequence MLDIAMPKIE…QYSQTIADFN (225 aa). Residues 243 to 323 form an alpha C-terminal domain (alpha-CTD) region; it reads PADIYDTPIE…TNSSPAGIES (81 aa).

It belongs to the RNA polymerase alpha chain family. In terms of assembly, homodimer. The RNAP catalytic core consists of 2 alpha, 1 beta, 1 beta' and 1 omega subunit. When a sigma factor is associated with the core the holoenzyme is formed, which can initiate transcription.

The catalysed reaction is RNA(n) + a ribonucleoside 5'-triphosphate = RNA(n+1) + diphosphate. In terms of biological role, DNA-dependent RNA polymerase catalyzes the transcription of DNA into RNA using the four ribonucleoside triphosphates as substrates. In Roseiflexus castenholzii (strain DSM 13941 / HLO8), this protein is DNA-directed RNA polymerase subunit alpha.